Here is a 241-residue protein sequence, read N- to C-terminus: Xyloglucan-specific endo-beta-1,4-glucanase A (241 aa).

An N-terminal signal peptide occupies residues 1–16 (MKVLALSALLSLASAA). N-linked (GlcNAc...) asparagine glycosylation is present at Asn47.

It belongs to the glycosyl hydrolase 12 (cellulase H) family.

It is found in the secreted. The catalysed reaction is xyloglucan + H2O = xyloglucan oligosaccharides.. Catalyzes endohydrolysis of 1,4-beta-D-glucosidic linkages in xyloglucan with retention of the beta-configuration of the glycosyl residues. Specific for xyloglucan and does not hydrolyze other cell wall components. The sequence is that of Xyloglucan-specific endo-beta-1,4-glucanase A (xgeA) from Aspergillus niger.